Reading from the N-terminus, the 65-residue chain is Myosin-11 (65 aa).

In terms of domain architecture, Myosin motor spans 1–65; the sequence is RSGKLDAFLV…NWQWWRLFTK (65 aa).

This sequence belongs to the TRAFAC class myosin-kinesin ATPase superfamily. Myosin family. As to quaternary structure, muscle myosin is a hexameric protein that consists of 2 heavy chain subunits (MHC), 2 alkali light chain subunits (MLC) and 2 regulatory light chain subunits (MLC-2).

Its subcellular location is the melanosome. It is found in the cytoplasm. The protein resides in the myofibril. Its function is as follows. Muscle contraction. In Sus scrofa (Pig), this protein is Myosin-11 (MYH11).